A 611-amino-acid polypeptide reads, in one-letter code: Glutamine--fructose-6-phosphate aminotransferase [isomerizing] (611 aa).

Cys-2 serves as the catalytic Nucleophile; for GATase activity. Positions 2–219 constitute a Glutamine amidotransferase type-2 domain; the sequence is CGIVGAVAER…EGDIAEIRRD (218 aa). SIS domains follow at residues 287 to 427 and 460 to 601; these read AAEL…VKGS and VAEL…VDQP. Lys-606 functions as the For Fru-6P isomerization activity in the catalytic mechanism.

In terms of assembly, homodimer.

Its subcellular location is the cytoplasm. The catalysed reaction is D-fructose 6-phosphate + L-glutamine = D-glucosamine 6-phosphate + L-glutamate. In terms of biological role, catalyzes the first step in hexosamine metabolism, converting fructose-6P into glucosamine-6P using glutamine as a nitrogen source. In Pseudomonas syringae pv. tomato (strain ATCC BAA-871 / DC3000), this protein is Glutamine--fructose-6-phosphate aminotransferase [isomerizing].